The following is a 236-amino-acid chain: MIDYTKTLTTTSKNKTFDEGLRRYMLKVYNYMALALLLTGVAAITTISVEPIYHLMFQTGFGTIIMFAPLGIALYFFMGFGRMNLQTAQILFWVYAGLTGMSLSYLALIYTGTSIARTFFICSSVFGAMSLYGYSTSRDLTSMGSFFAMGLIGLIIASLVNLFLKSSSLSFATSLIGIVVFMGLIAWDTQKIKSMYYIAGNDEVGQKLSIMAAFTLYLDFINLFLYLMRFLGNRRD.

A run of 7 helical transmembrane segments spans residues 32-52, 61-81, 90-110, 115-135, 144-164, 167-187, and 208-228; these read MALALLLTGVAAITTISVEPI, FGTIIMFAPLGIALYFFMGFG, ILFWVYAGLTGMSLSYLALIY, IARTFFICSSVFGAMSLYGYS, GSFFAMGLIGLIIASLVNLFL, SSLSFATSLIGIVVFMGLIAW, and LSIMAAFTLYLDFINLFLYLM.

It belongs to the BI1 family.

It is found in the cell membrane. This is an uncharacterized protein from Rickettsia prowazekii (strain Madrid E).